The sequence spans 399 residues: CCA-adding enzyme (399 aa).

ATP-binding residues include glycine 28 and arginine 31. The CTP site is built by glycine 28 and arginine 31. Positions 41 and 43 each coordinate Mg(2+). ATP-binding residues include arginine 112, aspartate 155, arginine 158, arginine 161, and arginine 164. 5 residues coordinate CTP: arginine 112, aspartate 155, arginine 158, arginine 161, and arginine 164.

Belongs to the tRNA nucleotidyltransferase/poly(A) polymerase family. Bacterial CCA-adding enzyme type 3 subfamily. As to quaternary structure, homodimer. The cofactor is Mg(2+).

The enzyme catalyses a tRNA precursor + 2 CTP + ATP = a tRNA with a 3' CCA end + 3 diphosphate. The catalysed reaction is a tRNA with a 3' CCA end + 2 CTP + ATP = a tRNA with a 3' CCACCA end + 3 diphosphate. Its function is as follows. Catalyzes the addition and repair of the essential 3'-terminal CCA sequence in tRNAs without using a nucleic acid template. Adds these three nucleotides in the order of C, C, and A to the tRNA nucleotide-73, using CTP and ATP as substrates and producing inorganic pyrophosphate. tRNA 3'-terminal CCA addition is required both for tRNA processing and repair. Also involved in tRNA surveillance by mediating tandem CCA addition to generate a CCACCA at the 3' terminus of unstable tRNAs. While stable tRNAs receive only 3'-terminal CCA, unstable tRNAs are marked with CCACCA and rapidly degraded. This is CCA-adding enzyme from Staphylococcus saprophyticus subsp. saprophyticus (strain ATCC 15305 / DSM 20229 / NCIMB 8711 / NCTC 7292 / S-41).